The primary structure comprises 85 residues: Augerpeptide-s6a (85 aa).

Residues 1 to 20 (MTLTMSTVVFFSLILLTLGL) form the signal peptide. The propeptide occupies 21 to 43 (QPKDKDEGVMGRSRLGKRGLLMR). 3 cysteine pairs are disulfide-bonded: cysteine 54–cysteine 65, cysteine 58–cysteine 70, and cysteine 64–cysteine 81.

In terms of tissue distribution, expressed by the venom duct.

It localises to the secreted. This Terebra subulata (Chocolate spotted auger) protein is Augerpeptide-s6a.